The following is a 296-amino-acid chain: Fructose-bisphosphate aldolase class 1 (296 aa).

The Proton acceptor role is filled by glutamate 175. The Schiff-base intermediate with dihydroxyacetone-P role is filled by lysine 212.

Belongs to the class I fructose-bisphosphate aldolase family.

The enzyme catalyses beta-D-fructose 1,6-bisphosphate = D-glyceraldehyde 3-phosphate + dihydroxyacetone phosphate. It participates in carbohydrate degradation; glycolysis; D-glyceraldehyde 3-phosphate and glycerone phosphate from D-glucose: step 4/4. The sequence is that of Fructose-bisphosphate aldolase class 1 (fda) from Staphylococcus carnosus (strain TM300).